The chain runs to 550 residues: MCDMGGLDNLIANTAYLQARKSSEGDAKELQKRRKSLSLPPPDVSRNEVKETITLDYQSICVEQPIGQRLFKDFLATVPEYKLAEDFLEEVKEWELEEGSAKEQLMEKLVSRRFKEPAEGSLNFLGKDLSSRIQQAQSKDMPELILLAKDSGNAFLMDAPFQDFQNSPFYDRFLQWKAFERQPINQKYFYEFRILGKGGFGEVCAIQVKNTGQMYACKKLDKKRLKKKNGEKMALLEKEILEKVHSPFIVSLAYAYETKTHLCLVMSLMNGGDLKFHIYNVGDKGVEIKRVIFYSAQICCGILHLHSLKIVYRDMKPENVLLDDHGNCRLSDLGLAVKVKEGKAITQRAGTNGYMAPEILTDEDYSYPVDWFAMGCSIFEMIAAYTPFRDPKEKTSKEELKRKTLEDEVVFPLPTFTEEAKDICRLFLAKKPQNRLGSRTNDDDPRKHAFFKSINFQRLEAGMVDPPFVPDPSVVYAKDISDIADFSEVKGIEFDDKDAKLFKRFSTGAVPISWQKEIIDTGLFDELNDPSREVTGGGNSGEKSGVCSIL.

Positions 22 to 45 are disordered; that stretch reads SSEGDAKELQKRRKSLSLPPPDVS. Serine 36 is subject to Phosphoserine. The 118-residue stretch at 57-174 folds into the RGS domain; the sequence is YQSICVEQPI…QNSPFYDRFL (118 aa). The region spanning 189–451 is the Protein kinase domain; it reads FYEFRILGKG…DDDPRKHAFF (263 aa). Residues 195 to 203 and lysine 218 contribute to the ATP site; that span reads LGKGGFGEV. Residue aspartate 314 is the Proton acceptor of the active site. Positions 452–517 constitute an AGC-kinase C-terminal domain; the sequence is KSINFQRLEA…GAVPISWQKE (66 aa). Residue serine 487 is modified to Phosphoserine. Residues 531 to 550 are disordered; sequence SREVTGGGNSGEKSGVCSIL. Residue cysteine 547 is modified to Cysteine methyl ester. Cysteine 547 carries S-geranylgeranyl cysteine lipidation. Positions 548 to 550 are cleaved as a propeptide — removed in mature form; it reads SIL.

This sequence belongs to the protein kinase superfamily. AGC Ser/Thr protein kinase family. GPRK subfamily. In terms of processing, autophosphorylated in vitro at Ser-487. Phosphorylation at Ser-36 is regulated by light and activated by cAMP. As to expression, retina, cones.

It is found in the membrane. It catalyses the reaction L-threonyl-[rhodopsin] + ATP = O-phospho-L-threonyl-[rhodopsin] + ADP + H(+). The catalysed reaction is L-seryl-[rhodopsin] + ATP = O-phospho-L-seryl-[rhodopsin] + ADP + H(+). Retina-specific kinase involved in the shutoff of the photoresponse and adaptation to changing light conditions via cone opsin phosphorylation, including rhodopsin (RHO). This is Rhodopsin kinase grk7-b (grk7-b) from Xenopus laevis (African clawed frog).